The chain runs to 441 residues: Tol-Pal system protein TolB (441 aa).

The N-terminal stretch at 1-39 is a signal peptide; it reads MPAMTPAFRRADLTGFLRTYGAALILLLAAMLAWQPAQA.

The protein belongs to the TolB family. The Tol-Pal system is composed of five core proteins: the inner membrane proteins TolA, TolQ and TolR, the periplasmic protein TolB and the outer membrane protein Pal. They form a network linking the inner and outer membranes and the peptidoglycan layer.

It is found in the periplasm. Functionally, part of the Tol-Pal system, which plays a role in outer membrane invagination during cell division and is important for maintaining outer membrane integrity. The polypeptide is Tol-Pal system protein TolB (Bordetella bronchiseptica (strain ATCC BAA-588 / NCTC 13252 / RB50) (Alcaligenes bronchisepticus)).